We begin with the raw amino-acid sequence, 406 residues long: Peptidase T (406 aa).

H77 contributes to the Zn(2+) binding site. The active site involves D79. D139 lines the Zn(2+) pocket. The Proton acceptor role is filled by E173. Zn(2+)-binding residues include E174, D196, and H377.

It belongs to the peptidase M20B family. It depends on Zn(2+) as a cofactor.

It is found in the cytoplasm. The enzyme catalyses Release of the N-terminal residue from a tripeptide.. Cleaves the N-terminal amino acid of tripeptides. The chain is Peptidase T from Parabacteroides distasonis (strain ATCC 8503 / DSM 20701 / CIP 104284 / JCM 5825 / NCTC 11152).